The sequence spans 82 residues: Small ribosomal subunit protein uS17 (82 aa).

The protein belongs to the universal ribosomal protein uS17 family. In terms of assembly, part of the 30S ribosomal subunit.

One of the primary rRNA binding proteins, it binds specifically to the 5'-end of 16S ribosomal RNA. The sequence is that of Small ribosomal subunit protein uS17 from Aeromonas salmonicida (strain A449).